We begin with the raw amino-acid sequence, 542 residues long: MTSLFFYQISDKQKRWNWYWKLALAIIVLVVIIYSFIDNFSGFNVSGFRNFSRNFIRLFTPDTARDYFLGSYLLQTIFYVVSGSILGFVIALWFSYLTAFKIQPLYIALPTRLFTIFLRSFPVLVFAFLFNNLFNKQLTATLTITWFSWLWSTKYITAFFENSALKQFFNQSSRYIHKFKAFWNTVVISQAERLWLFLLYSLEANFRWTTVLSIAGITGIGELIATPLGGTVQLNLVLIPMLTLIGFLLFLEASVFLLTKFVLQKQSQAGDYFLQAKTLQKRKWKKVMIYILALVLAAFTLANLVQLDYTVKAPGFVADFFKQFFQTKTAFLISEDANINPLLMLLKLTTQAISLITLVFVLALLFGFLASKLFSTITSISLKLLLLVIRVIPSVLLFRLFDPIIFRPETTIIFVLAIHSAASYGQLITINFDNANEGVINNMQNHGFSRFYILWNYLIPTTKPQLLNTLSDSFDNAIRDLVVFGIFGGSIIGGRINNFFERAQYSELGTITLPLMVYLMVFEVILMAVRLNKLKVWQRHLW.

12 helical membrane passes run 23–43 (ALAI…FSGF), 77–97 (IFYV…FSYL), 114–134 (FTIF…NNLF), 140–160 (ATLT…TAFF), 212–232 (LSIA…GGTV), 236–256 (LVLI…ASVF), 287–307 (VMIY…LVQL), 350–370 (TQAI…GFLA), 386–406 (LLVI…PIIF), 412–432 (IIFV…TINF), 481–501 (LVVF…NFFE), and 509–529 (GTIT…LMAV). Residues 349-526 (TTQAISLITL…VYLMVFEVIL (178 aa)) enclose the ABC transmembrane type-1 domain.

The protein belongs to the binding-protein-dependent transport system permease family.

It localises to the cell membrane. Probably part of a high-affinity transport system. The sequence is that of ABC transport system permease protein p69 (p69) from Mycoplasma pneumoniae (strain ATCC 29342 / M129 / Subtype 1) (Mycoplasmoides pneumoniae).